Consider the following 205-residue polypeptide: Small ribosomal subunit protein uS4 (205 aa).

Residues 1–16 (MSKRESSKYKIDRRMG) show a composition bias toward basic and acidic residues. The disordered stretch occupies residues 1 to 46 (MSKRESSKYKIDRRMGENIWGRPKSPVNRREYGPGQHGQRRKGKLS). The region spanning 94 to 157 (SRLDAIVYRA…KQLVTVLEAV (64 aa)) is the S4 RNA-binding domain.

It belongs to the universal ribosomal protein uS4 family. Part of the 30S ribosomal subunit. Contacts protein S5. The interaction surface between S4 and S5 is involved in control of translational fidelity.

In terms of biological role, one of the primary rRNA binding proteins, it binds directly to 16S rRNA where it nucleates assembly of the body of the 30S subunit. Functionally, with S5 and S12 plays an important role in translational accuracy. In Rhizobium etli (strain ATCC 51251 / DSM 11541 / JCM 21823 / NBRC 15573 / CFN 42), this protein is Small ribosomal subunit protein uS4.